A 481-amino-acid chain; its full sequence is Protein FIZZY-RELATED 3 (481 aa).

Residues 100-165 (PAGGQGSASS…RKVPKTPHKV (66 aa)) are disordered. Positions 125–136 (SNSSPSSPFSPS) are enriched in low complexity. Residues 154-163 (PPRKVPKTPH) show a composition bias toward basic residues. WD repeat units lie at residues 172–209 (QDDF…VTKL), 213–252 (GPND…RVRT), 255–292 (GHQT…DFVS), 296–335 (GHKS…PILK), 338–380 (EHTA…QLNS), 382–423 (DTGS…KVAT), and 426–465 (GHSM…KMQT).

Belongs to the WD repeat CDC20/Fizzy family. In terms of assembly, associates with the APC/C complex. Interacts with CDC20-1, CDC20-2, CYCA1-1, CYCA3-4, CYCB1-1 and CYCB1-2. Binds to GIG1 and PYM.

The protein operates within protein modification; protein ubiquitination. Activator protein that regulates the ubiquitin ligase activity and substrate specificity of the anaphase promoting complex/cyclosome (APC/C). The sequence is that of Protein FIZZY-RELATED 3 (FZR3) from Arabidopsis thaliana (Mouse-ear cress).